Consider the following 531-residue polypeptide: High-affinity glucose transporter ght2 (531 aa).

Topologically, residues 5-13 are cytoplasmic; the sequence is RGKNFTLVM. Residues 14–34 traverse the membrane as a helical segment; sequence LIFVSMAGWMFGADTGSIGGV. Residues 35-62 are Extracellular-facing; it reads TSMRDFRERYADRYDPITDQYSLSSARQ. The chain crosses the membrane as a helical span at residues 63 to 83; sequence GLLTGMVNVGSLFGCIISSPI. Topologically, residues 84-91 are cytoplasmic; that stretch reads ADRFGKRL. Residues 92-112 form a helical membrane-spanning segment; sequence SIIGFCAVYIIGIIVQVTAVP. Residues 113–116 lie on the Extracellular side of the membrane; sequence SWVQ. Residues 117 to 137 form a helical membrane-spanning segment; that stretch reads IMVAKIWTGIGIGALSVLAPG. Residues 138–148 are Cytoplasmic-facing; that stretch reads YQSETAPPSIR. A helical membrane pass occupies residues 149-169; it reads GTVVVTYQLFVTGGIFIAACI. Residues 170–183 are Extracellular-facing; sequence NMGTHKLHKTAQWR. A helical membrane pass occupies residues 184 to 204; that stretch reads VSIGINLLWGIITMIGILFLP. At 205-270 the chain is on the cytoplasmic side; the sequence is ESPRYLIQVG…IFGKDIRYRT (66 aa). Residues 271-289 traverse the membrane as a helical segment; it reads FLGMFVMSLQQLTGNNYFF. Residues 290–305 lie on the Extracellular side of the membrane; the sequence is YYGFSVMQGAGINSPY. A helical transmembrane segment spans residues 306–326; sequence LSAMILDAVNFGCTFGGMYVL. The Cytoplasmic portion of the chain corresponds to 327–332; sequence ERFGRR. The helical transmembrane segment at 333–353 threads the bilayer; sequence NPLIIGGIWQSICFFIYSAVG. The Extracellular segment spans residues 354-367; that stretch reads SRALYHKNGTSNTR. Residue Asn361 is glycosylated (N-linked (GlcNAc...) asparagine). The helical transmembrane segment at 368–388 threads the bilayer; the sequence is AGAVMIVMACLFIFGFAQTWA. Residues 389-408 are Cytoplasmic-facing; sequence PAAYVIVGESYPVRYRSKCA. The helical transmembrane segment at 409–429 threads the bilayer; the sequence is AVATASNWLWNFLISFFTPFI. Topologically, residues 430 to 436 are extracellular; that stretch reads QASIGFK. The helical transmembrane segment at 437–457 threads the bilayer; that stretch reads YGYVFASCNLTGAIVIFLFAK. At 458-531 the chain is on the cytoplasmic side; sequence ETKGLTLEEI…QYSSHEEDYA (74 aa). The interval 491–531 is disordered; it reads KKVEKEKSRKGGARGESVEYVERASNTDSSPQYSSHEEDYA. 4 positions are modified to phosphoserine: Ser507, Ser515, Ser519, and Ser520. The span at 514-524 shows a compositional bias: polar residues; the sequence is ASNTDSSPQYS. Tyr523 is modified (phosphotyrosine).

Belongs to the major facilitator superfamily. Sugar transporter (TC 2.A.1.1) family.

The protein localises to the membrane. Its function is as follows. High-affinity glucose transporter. In Schizosaccharomyces pombe (strain 972 / ATCC 24843) (Fission yeast), this protein is High-affinity glucose transporter ght2 (ght2).